The primary structure comprises 291 residues: Bifunctional protein FolD (291 aa).

Residues 173–175 (GRS) and Ser-198 each bind NADP(+).

It belongs to the tetrahydrofolate dehydrogenase/cyclohydrolase family. As to quaternary structure, homodimer.

The catalysed reaction is (6R)-5,10-methylene-5,6,7,8-tetrahydrofolate + NADP(+) = (6R)-5,10-methenyltetrahydrofolate + NADPH. It carries out the reaction (6R)-5,10-methenyltetrahydrofolate + H2O = (6R)-10-formyltetrahydrofolate + H(+). It participates in one-carbon metabolism; tetrahydrofolate interconversion. Its function is as follows. Catalyzes the oxidation of 5,10-methylenetetrahydrofolate to 5,10-methenyltetrahydrofolate and then the hydrolysis of 5,10-methenyltetrahydrofolate to 10-formyltetrahydrofolate. The sequence is that of Bifunctional protein FolD from Psychrobacter sp. (strain PRwf-1).